The chain runs to 396 residues: S-adenosylmethionine synthase (396 aa).

His16 lines the ATP pocket. Asp18 contributes to the Mg(2+) binding site. Glu44 is a binding site for K(+). Residues Glu57 and Gln100 each coordinate L-methionine. A flexible loop region spans residues 100–110; sequence QSVDIAQGVDR. ATP is bound by residues 165-167, 231-232, Asp240, 246-247, Ala263, and Lys267; these read DAK, KF, and RK. Residue Asp240 coordinates L-methionine. Residue Lys271 participates in L-methionine binding.

It belongs to the AdoMet synthase family. In terms of assembly, homotetramer; dimer of dimers. It depends on Mg(2+) as a cofactor. K(+) serves as cofactor.

Its subcellular location is the cytoplasm. The catalysed reaction is L-methionine + ATP + H2O = S-adenosyl-L-methionine + phosphate + diphosphate. Its pathway is amino-acid biosynthesis; S-adenosyl-L-methionine biosynthesis; S-adenosyl-L-methionine from L-methionine: step 1/1. Catalyzes the formation of S-adenosylmethionine (AdoMet) from methionine and ATP. The overall synthetic reaction is composed of two sequential steps, AdoMet formation and the subsequent tripolyphosphate hydrolysis which occurs prior to release of AdoMet from the enzyme. This chain is S-adenosylmethionine synthase, found in Marinobacter nauticus (strain ATCC 700491 / DSM 11845 / VT8) (Marinobacter aquaeolei).